Here is a 785-residue protein sequence, read N- to C-terminus: MRVPFSWLKAYVPELESPEVLEERLAGLGFETDRIERVFPIPRGVVFARVLEAHPIPGTRLKRLVLDAGRTVEVVSGAENARKGIGVALALPGTELPGLGQKVGERVIQGVRSFGMALSPRELGVGEYGGGLLEFPEDALPPGTPLSEAWPEEVVLDLEVTPNRPDALGLLGLARDLHALGYALVEPEAALKAEALPLPFALKVEDPEGAPHFTLGYAFGLRVAPSPLWMQRALFAAGMRPINNVVDVTNYVMLERAQPMHAFDLRFVGEGIAVRRAREGERLKTLDGVERTLHPEDLVIAGWRGEESFPLGLAGVMGGAESEVREDTEAIALEVACFDPVSIRKTARRHGLRTEASHRFERGVDPLGQVPAQRRALSLLQALAGARVAEALLEAGSPKPPEAIPFRPEYANRLLGTSYPEAEQIAILKRLGCRVEGEGPTYRVTPPSHRLDLRLEEDLVEEVARIQGYETIPLALPAFFPAPDNRGVEAPYRKEQRLREVLSGLGFQEVYTYSFMDPEDARRFRLDPPRLLLLNPLAPEKAALRTHLFPGLVRVLKENLDLDRPERALLFEVGRVFREREETHLAGLLFGEGVGLPWAKERLSGYFLLKGYLEALFARLGLAFRVEAQAFPFLHPGVSGRVLVEGEEVGFLGALHPEIAQELELPPVHLFELRLPLPDKPLAFQDPSRHPAAFRDLAVVVPAPTPYGEVEALVREAAGPYLESLALFDLYQGPPLPEGHKSLAFHLRFRHPKRTLRDEEVEEAVSRVAEALRARGFGLRGLDTP.

The tRNA-binding domain occupies 39 to 147 (FPIPRGVVFA…DALPPGTPLS (109 aa)). The B5 domain occupies 399–474 (KPPEAIPFRP…RIQGYETIPL (76 aa)). Aspartate 452, aspartate 458, glutamate 461, and glutamate 462 together coordinate Mg(2+). One can recognise an FDX-ACB domain in the interval 688-780 (SRHPAAFRDL…ALRARGFGLR (93 aa)).

The protein belongs to the phenylalanyl-tRNA synthetase beta subunit family. Type 1 subfamily. As to quaternary structure, tetramer of two alpha and two beta subunits. Mg(2+) serves as cofactor.

The protein localises to the cytoplasm. It catalyses the reaction tRNA(Phe) + L-phenylalanine + ATP = L-phenylalanyl-tRNA(Phe) + AMP + diphosphate + H(+). In Thermus thermophilus (strain ATCC 27634 / DSM 579 / HB8), this protein is Phenylalanine--tRNA ligase beta subunit (pheT).